The following is a 119-amino-acid chain: Large ribosomal subunit protein bL20 (119 aa).

The protein belongs to the bacterial ribosomal protein bL20 family.

In terms of biological role, binds directly to 23S ribosomal RNA and is necessary for the in vitro assembly process of the 50S ribosomal subunit. It is not involved in the protein synthesizing functions of that subunit. The sequence is that of Large ribosomal subunit protein bL20 from Xylella fastidiosa (strain 9a5c).